The following is a 285-amino-acid chain: Protoheme IX farnesyltransferase (285 aa).

Helical transmembrane passes span 16-36 (AKPKVVSLLDVVAIASYILAF), 40-60 (WYNLIPVLIGGSIAAGGSMII), 106-126 (LLANPLTAFFILLGSLVYVFV), 136-156 (WLNIVIGGFAGSAAAWAGYAA), 165-185 (SLLLGLLVFAWTPGHFWALAL), 217-237 (ILMIPFALGLMLYLNLIYVII), and 265-285 (YKFSAPYLAIVMIAAVISFIL).

Belongs to the UbiA prenyltransferase family. Protoheme IX farnesyltransferase subfamily.

Its subcellular location is the cell membrane. It catalyses the reaction heme b + (2E,6E)-farnesyl diphosphate + H2O = Fe(II)-heme o + diphosphate. It functions in the pathway porphyrin-containing compound metabolism; heme O biosynthesis; heme O from protoheme: step 1/1. Functionally, converts heme B (protoheme IX) to heme O by substitution of the vinyl group on carbon 2 of heme B porphyrin ring with a hydroxyethyl farnesyl side group. In Sulfolobus acidocaldarius (strain ATCC 33909 / DSM 639 / JCM 8929 / NBRC 15157 / NCIMB 11770), this protein is Protoheme IX farnesyltransferase.